A 282-amino-acid chain; its full sequence is tRNA uridine(34) hydroxylase (282 aa).

Residues 128 to 222 form the Rhodanese domain; the sequence is EGRPVVMLDT…YFEEVGGDHY (95 aa). The active-site Cysteine persulfide intermediate is the cysteine 182.

This sequence belongs to the TrhO family.

The enzyme catalyses uridine(34) in tRNA + AH2 + O2 = 5-hydroxyuridine(34) in tRNA + A + H2O. Catalyzes oxygen-dependent 5-hydroxyuridine (ho5U) modification at position 34 in tRNAs. The chain is tRNA uridine(34) hydroxylase from Cupriavidus pinatubonensis (strain JMP 134 / LMG 1197) (Cupriavidus necator (strain JMP 134)).